We begin with the raw amino-acid sequence, 91 residues long: Small ribosomal subunit protein bS6 (91 aa).

The protein belongs to the bacterial ribosomal protein bS6 family.

Binds together with bS18 to 16S ribosomal RNA. The sequence is that of Small ribosomal subunit protein bS6 from Leptospira biflexa serovar Patoc (strain Patoc 1 / Ames).